Consider the following 599-residue polypeptide: Aspartate--tRNA(Asp/Asn) ligase (599 aa).

Position 174 (glutamate 174) interacts with L-aspartate. Positions 198–201 (QLFK) are aspartate. Arginine 220 contributes to the L-aspartate binding site. Residues 220–222 (RDE) and glutamine 229 contribute to the ATP site. Position 457 (histidine 457) interacts with L-aspartate. An ATP-binding site is contributed by glutamate 491. Arginine 498 contributes to the L-aspartate binding site. 543–546 (GLDR) contributes to the ATP binding site.

This sequence belongs to the class-II aminoacyl-tRNA synthetase family. Type 1 subfamily. As to quaternary structure, homodimer.

Its subcellular location is the cytoplasm. It carries out the reaction tRNA(Asx) + L-aspartate + ATP = L-aspartyl-tRNA(Asx) + AMP + diphosphate. Aspartyl-tRNA synthetase with relaxed tRNA specificity since it is able to aspartylate not only its cognate tRNA(Asp) but also tRNA(Asn). Reaction proceeds in two steps: L-aspartate is first activated by ATP to form Asp-AMP and then transferred to the acceptor end of tRNA(Asp/Asn). This chain is Aspartate--tRNA(Asp/Asn) ligase, found in Paraburkholderia phytofirmans (strain DSM 17436 / LMG 22146 / PsJN) (Burkholderia phytofirmans).